Consider the following 317-residue polypeptide: Putative pyridoxal kinase BUD17 (317 aa).

Substrate-binding residues include serine 16 and tyrosine 128. Residues 190–191 and 220–232 each bind ATP; these read TS and EIPK…SGSG. Residue aspartate 233 participates in substrate binding.

This sequence belongs to the pyridoxine kinase family. A divalent metal cation serves as cofactor.

The protein localises to the cytoplasm. It localises to the nucleus. The enzyme catalyses pyridoxal + ATP = pyridoxal 5'-phosphate + ADP + H(+). Required for synthesis of pyridoxal-5-phosphate from vitamin B6. Important for bud site selection. The chain is Putative pyridoxal kinase BUD17 (BUD17) from Saccharomyces cerevisiae (strain ATCC 204508 / S288c) (Baker's yeast).